A 121-amino-acid chain; its full sequence is Putative membrane protein insertion efficiency factor (121 aa).

This sequence belongs to the UPF0161 family.

The protein localises to the cell membrane. Functionally, could be involved in insertion of integral membrane proteins into the membrane. The polypeptide is Putative membrane protein insertion efficiency factor (Rhodococcus opacus (strain B4)).